A 307-amino-acid polypeptide reads, in one-letter code: Tropinone reductase homolog At2g29340 (307 aa).

13-37 (LVTGGASGIGYAIVEELAGFGARIH) is an NADP(+) binding site. Ser146 is a substrate binding site. The active-site Proton acceptor is the Tyr159.

The protein belongs to the short-chain dehydrogenases/reductases (SDR) family. SDR65C subfamily.

The protein is Tropinone reductase homolog At2g29340 of Arabidopsis thaliana (Mouse-ear cress).